We begin with the raw amino-acid sequence, 930 residues long: Carnosine synthase 1 (930 aa).

The segment at 1–24 (MISVDRLSEEQALGMKEQEWAGPE) is disordered. Residues 624–825 (RPPPAAFSVP…LLLAAVLLAL (202 aa)) form the ATP-grasp domain. ATP is bound at residue 650–716 (VPFPAVAKLE…MEYVPGTEHD (67 aa)). Residues glutamate 782, glutamate 794, and asparagine 796 each contribute to the Mg(2+) site. Residues glutamate 782, glutamate 794, and asparagine 796 each contribute to the Mn(2+) site.

As to quaternary structure, homotetramer. The cofactor is Mg(2+). Mn(2+) is required as a cofactor.

It carries out the reaction beta-alanine + L-histidine + ATP = carnosine + ADP + phosphate + H(+). It catalyses the reaction 4-aminobutanoate + L-histidine + ATP = L-homocarnosine + ADP + phosphate + H(+). In terms of biological role, catalyzes the synthesis of carnosine and homocarnosine. Carnosine is synthesized more efficiently than homocarnosine. This chain is Carnosine synthase 1, found in Gallus gallus (Chicken).